A 530-amino-acid chain; its full sequence is ATP synthase subunit alpha 3 (530 aa).

174–181 (GDRATGKT) lines the ATP pocket. Residues 507–522 (TASATAPPDPPAASAA) show a composition bias toward low complexity. The tract at residues 507–530 (TASATAPPDPPAASAAELPQPDSP) is disordered.

The protein belongs to the ATPase alpha/beta chains family. F-type ATPases have 2 components, CF(1) - the catalytic core - and CF(0) - the membrane proton channel. CF(1) has five subunits: alpha(3), beta(3), gamma(1), delta(1), epsilon(1). CF(0) has three main subunits: a(1), b(2) and c(9-12). The alpha and beta chains form an alternating ring which encloses part of the gamma chain. CF(1) is attached to CF(0) by a central stalk formed by the gamma and epsilon chains, while a peripheral stalk is formed by the delta and b chains.

The protein resides in the cell inner membrane. It carries out the reaction ATP + H2O + 4 H(+)(in) = ADP + phosphate + 5 H(+)(out). In terms of biological role, produces ATP from ADP in the presence of a proton gradient across the membrane. The alpha chain is a regulatory subunit. In Paraburkholderia xenovorans (strain LB400), this protein is ATP synthase subunit alpha 3.